Reading from the N-terminus, the 1219-residue chain is FK506-binding protein 15 (1219 aa).

M1 carries the N-acetylmethionine modification. S14 and S23 each carry phosphoserine. Residues 41-66 (YTAPKQPKKGQGTAATGNQATPKTAP) form a disordered region. The segment covering 53–66 (TAATGNQATPKTAP) has biased composition (polar residues). The important for function in growth cone organization stretch occupies residues 72–169 (PTILVATAVH…AVEFNKQVCI (98 aa)). K92 bears the N6-acetyllysine mark. The PPIase FKBP-type domain maps to 197 to 290 (GDSLEVAYTG…VFEVEVRRVK (94 aa)). Residues 294–349 (DSGSDGHSVSSRDSAAPSPIPGADNLSADPVVSPPTSIPFKSGEPALRTKSNSLSE) are disordered. A phosphoserine mark is found at S307, S311, S326, S344, S346, and S356. A disordered region spans residues 381–433 (PQLDSNDSEIEDVNTLQGGGQPVVTPSVQPSLHPAHPALPQMTSQAPQPSVTG). The segment covering 421–433 (QMTSQAPQPSVTG) has biased composition (polar residues). Coiled-coil stretches lie at residues 522-789 (AVSK…TDQA), 818-878 (DEHL…GVEA), and 925-951 (TLQL…AEER). S619 is modified (phosphoserine). The tract at residues 739–761 (LEKNLSERKKKSAQERSQAEEEI) is disordered. Positions 931–1219 (QQEQEKEESS…DDDDDIDWLG (289 aa)) are disordered. Residues S939, S940, S941, and S956 each carry the phosphoserine modification. The span at 957–971 (QEQSASASSGQPQAP) shows a compositional bias: low complexity. 6 positions are modified to phosphoserine: S979, S1024, S1056, S1061, S1065, and S1097. Polar residues predominate over residues 1090-1100 (QESSTRLSLTS). Position 1099 is a phosphothreonine (T1099). S1114 carries the phosphoserine modification. The segment covering 1123 to 1139 (LKKDDVTSSTGPHKELS) has biased composition (basic and acidic residues). S1158, S1161, S1162, S1164, and S1195 each carry phosphoserine. The residue at position 1203 (T1203) is a Phosphothreonine. Positions 1207–1219 (GDDDDDDDIDWLG) are enriched in acidic residues.

Belongs to the FKBP-type PPIase family. Interacts with WIP and actin. Interacts with TBC1D23.

Its subcellular location is the cytoplasm. The protein resides in the cell projection. It is found in the axon. The protein localises to the early endosome. Its function is as follows. May be involved in the cytoskeletal organization of neuronal growth cones. Seems to be inactive as a PPIase. Involved in the transport of early endosomes at the level of transition between microfilament-based and microtubule-based movement. The polypeptide is FK506-binding protein 15 (FKBP15) (Homo sapiens (Human)).